Reading from the N-terminus, the 406-residue chain is Synaptic vesicle membrane protein VAT-1 homolog (406 aa).

The interval 1–57 is disordered; it reads MSAEREAAEAATVAAATEAGAETGTGAGEGAPSQPPTVEVASDPQPPPAPEASASAS. Residue S2 is modified to N-acetylserine. Phosphoserine is present on S2. Residues 9–22 show a composition bias toward low complexity; sequence EAATVAAATEAGAE. A phosphoserine mark is found at S33 and S42.

The protein belongs to the zinc-containing alcohol dehydrogenase family. Quinone oxidoreductase subfamily.

The protein resides in the cytoplasm. Its subcellular location is the mitochondrion outer membrane. Plays a part in calcium-regulated keratinocyte activation in epidermal repair mechanisms. Has no effect on cell proliferation. Possesses ATPase activity. Negatively regulates mitochondrial fusion in cooperation with mitofusin proteins (MFN1-2). The polypeptide is Synaptic vesicle membrane protein VAT-1 homolog (Vat1) (Mus musculus (Mouse)).